We begin with the raw amino-acid sequence, 454 residues long: DNA-binding protein (454 aa).

Positions 1–41 (MSHKKVVAISESSSDEEVPVAPPTAPPKKRQRKAVEEPRGH) are disordered. Tyr129 is modified (phosphotyrosine; by host). Residues Cys213 and His215 each coordinate Zn(2+). The segment at 226–260 (VEMDVNSENAQRALKENPEKTKIVSNRWGRNVVQF) is flexible loop. Cys268, Cys284, Cys325, Cys327, Cys378, and Cys394 together coordinate Zn(2+). The tract at residues 440–454 (TILPQGQHDDDLVLF) is C-terminal arm, DBP binding.

It belongs to the adenoviridae E2A DNA-binding protein family. In terms of assembly, homomultimerizes on viral ssDNA bound to pTP. Forms a initiation complex with viral polymerase, pTP and hosts NFIA and POU2F1/OCT1. Interacts with host SRCAP.

Its subcellular location is the host nucleus. Plays a role in the elongation phase of viral strand displacement replication by unwinding the template in an ATP-independent fashion, employing its capacity to form multimers. Also enhances the rate of initiation. Released from template upon second strand synthesis. Assembles in complex with viral pTP, viral pol, host NFIA and host POU2F1/OCT1 on viral origin of replication. Covers the whole ssDNA genome during synthesis. The complementary strand synthesis induces its relese from DNA template. May inhibit cellular transcription mediated by the interaction between host SRCAP and CBP. This is DNA-binding protein from Canine adenovirus serotype 1 (strain CLL) (CAdV-1).